The chain runs to 485 residues: Rhamnulokinase (485 aa).

12 to 16 provides a ligand contact to ATP; it reads ATSGR. Substrate is bound by residues G80 and 238 to 240; that span reads HDT. D239 acts as the Proton acceptor in catalysis. T261 contributes to the ATP binding site. Residue N298 coordinates substrate. E306 lines the ATP pocket. C355 and C372 are oxidised to a cystine. G404 contacts ATP.

This sequence belongs to the rhamnulokinase family. Requires Mg(2+) as cofactor.

It catalyses the reaction L-rhamnulose + ATP = L-rhamnulose 1-phosphate + ADP + H(+). It participates in carbohydrate degradation; L-rhamnose degradation; glycerone phosphate from L-rhamnose: step 2/3. Functionally, involved in the catabolism of L-rhamnose (6-deoxy-L-mannose). Catalyzes the transfer of the gamma-phosphate group from ATP to the 1-hydroxyl group of L-rhamnulose to yield L-rhamnulose 1-phosphate. This chain is Rhamnulokinase, found in Bacteroides thetaiotaomicron (strain ATCC 29148 / DSM 2079 / JCM 5827 / CCUG 10774 / NCTC 10582 / VPI-5482 / E50).